A 240-amino-acid chain; its full sequence is Probable phosphatase Athe_0620 (240 aa).

Zn(2+) is bound by residues His8, His10, His16, His41, Glu74, His102, His132, Asp192, and His194.

Belongs to the PHP family. The cofactor is Zn(2+).

The chain is Probable phosphatase Athe_0620 from Caldicellulosiruptor bescii (strain ATCC BAA-1888 / DSM 6725 / KCTC 15123 / Z-1320) (Anaerocellum thermophilum).